Reading from the N-terminus, the 186-residue chain is Ribosome-recycling factor (186 aa).

This sequence belongs to the RRF family.

The protein resides in the cytoplasm. Responsible for the release of ribosomes from messenger RNA at the termination of protein biosynthesis. May increase the efficiency of translation by recycling ribosomes from one round of translation to another. This chain is Ribosome-recycling factor, found in Cupriavidus necator (strain ATCC 17699 / DSM 428 / KCTC 22496 / NCIMB 10442 / H16 / Stanier 337) (Ralstonia eutropha).